Here is a 128-residue protein sequence, read N- to C-terminus: Small ribosomal subunit protein uS9 (128 aa).

Belongs to the universal ribosomal protein uS9 family.

This Amoebophilus asiaticus (strain 5a2) protein is Small ribosomal subunit protein uS9.